Consider the following 377-residue polypeptide: Cilia- and flagella-associated protein 263 (377 aa).

Coiled coils occupy residues 95-139 (LTVE…ADIR) and 169-355 (QKVM…LKGY).

Belongs to the CFAP263 family. In terms of assembly, forms a complex with CFAP184; the interaction is required for functional activity in cilia. Interacts with HAP1 and PCM1.

The protein localises to the cytoplasm. The protein resides in the cytoskeleton. It localises to the microtubule organizing center. It is found in the centrosome. Its subcellular location is the centriolar satellite. The protein localises to the cell projection. The protein resides in the cilium. Functionally, component of centriolar satellites contributing to primary cilium formation. In complex with CFAP263, acts as a regulator of ciliary beating that connects radial spoke 3 (RS3) to the inner dynein arm (IDA) and the nexin-dynein regulatory complex (N-DRC). The complex is positioned parallel to N-DRC and forms a connection between the arch at the base of RS3, the IDA tail and N-DRC. The chain is Cilia- and flagella-associated protein 263 (Cfap263) from Mus musculus (Mouse).